The chain runs to 555 residues: CTL-like protein DDB_G0274487 (555 aa).

A compositionally biased stretch (polar residues) spans 1 to 17; the sequence is MGIEDNSQQPNTGSPYG. A disordered region spans residues 1 to 101; sequence MGIEDNSQQP…NLNKANDRES (101 aa). A compositionally biased stretch (low complexity) spans 19–63; the sequence is SPPSQYNPYGQQPPQQQQYNPYGEQQQQPQQQQQYGYQPQFQPTY. Residues 79–90 are compositionally biased toward pro residues; the sequence is PFPPQQQQPPPI. N-linked (GlcNAc...) asparagine glycosylation occurs at Asn116. Residues 138–158 traverse the membrane as a helical segment; it reads IWFSILFGLNFGLLIVVSASA. N-linked (GlcNAc...) asparagine glycosylation is present at Asn174. 10 consecutive transmembrane segments (helical) span residues 182 to 202, 210 to 230, 231 to 251, 284 to 304, 313 to 333, 340 to 360, 372 to 392, 405 to 425, 472 to 492, and 493 to 513; these read FLFAILPFTIVFSLLYIWAWL, ESLIKYSFFGAMGLMIGYCVF, FFVWGAIYLGIIFAIMAFFII, AGYVSIFINFVWFIVWGSAFA, AIQTCINIYLVFTLYWVFHVI, TVSGLLATWYFCSGPNGVGMP, LTTSFGSICFGSLIISLIETL, VVVKIIGYIFNCILSMLSSIV, IAIGGLVASLLLSILGALISI, and PFDMSVYGGALALFIGYLVII.

The protein belongs to the CTL (choline transporter-like) family.

It is found in the membrane. The sequence is that of CTL-like protein DDB_G0274487 from Dictyostelium discoideum (Social amoeba).